A 283-amino-acid chain; its full sequence is Homeobox protein Hox-C12b (283 aa).

The homeobox DNA-binding region spans 215–274; that stretch reads TRKKRKPYSKLQLNELEGEFILNEFITRQRRRELSDRLNLTDQQVKIWFQNRRMKKKRLL.

It belongs to the Abd-B homeobox family.

Its subcellular location is the nucleus. Sequence-specific transcription factor which is part of a developmental regulatory system that provides cells with specific positional identities on the anterior-posterior axis. The sequence is that of Homeobox protein Hox-C12b (hoxc12b) from Danio rerio (Zebrafish).